The chain runs to 316 residues: UPF0324 membrane protein SO_4708 (316 aa).

A run of 9 helical transmembrane segments spans residues 61–80 (LLSY…AAIE), 85–107 (NLGL…TRAL), 114–136 (GHLI…APAV), 146–168 (ALAC…GHLL), 175–197 (FGVW…SAYG), 207–226 (IKLA…ALIF), 233–252 (LNLP…AHWL), 262–281 (LFMV…GAGI), and 293–315 (PLLL…ILYF).

This sequence belongs to the UPF0324 family.

It localises to the cell membrane. The sequence is that of UPF0324 membrane protein SO_4708 from Shewanella oneidensis (strain ATCC 700550 / JCM 31522 / CIP 106686 / LMG 19005 / NCIMB 14063 / MR-1).